Consider the following 503-residue polypeptide: Na(+)-translocating NADH-quinone reductase subunit B (503 aa).

5 helical membrane-spanning segments follow: residues 55-75, 94-114, 120-140, 161-181, and 186-206; these read MMLV…NSGL, ISGF…VPIL, IFIP…VLFA, TLPP…GIVV, and FGGT…FLFF. Residue Thr248 is modified to FMN phosphoryl threonine. 5 helical membrane-spanning segments follow: residues 361 to 381, 386 to 406, 417 to 437, 452 to 472, and 475 to 495; these read TSTF…IASW, AFGI…VLIV, FFIP…LVFM, WIYG…NPAY, and GVML…YFAV.

The protein belongs to the NqrB/RnfD family. In terms of assembly, composed of six subunits; NqrA, NqrB, NqrC, NqrD, NqrE and NqrF. The cofactor is FMN.

It is found in the cell inner membrane. It catalyses the reaction a ubiquinone + n Na(+)(in) + NADH + H(+) = a ubiquinol + n Na(+)(out) + NAD(+). Functionally, NQR complex catalyzes the reduction of ubiquinone-1 to ubiquinol by two successive reactions, coupled with the transport of Na(+) ions from the cytoplasm to the periplasm. NqrA to NqrE are probably involved in the second step, the conversion of ubisemiquinone to ubiquinol. This chain is Na(+)-translocating NADH-quinone reductase subunit B, found in Chlamydia pneumoniae (Chlamydophila pneumoniae).